The following is a 246-amino-acid chain: Probable transcriptional regulatory protein GK2594 (246 aa).

This sequence belongs to the TACO1 family.

It localises to the cytoplasm. The protein is Probable transcriptional regulatory protein GK2594 of Geobacillus kaustophilus (strain HTA426).